The following is a 602-amino-acid chain: Ligand-dependent nuclear receptor corepressor-like protein (602 aa).

The interval 104 to 124 (PSLDSSQSTPTEELSSQGQSN) is disordered. Residues 106 to 124 (LDSSQSTPTEELSSQGQSN) show a composition bias toward polar residues. Residues Lys-242, Lys-319, Lys-340, and Lys-397 each participate in a glycyl lysine isopeptide (Lys-Gly) (interchain with G-Cter in SUMO2) cross-link. 2 disordered regions span residues 495 to 521 (TVDGTSENTEDGLDRKDSKQPRKKRGR) and 564 to 602 (ERSGTLKTPPKKKLRLPDTGLYNMTDSGTGSCKNSSKPV). The region spanning 516–568 (RKKRGRYRQYDHEIMEEAIAMVMSGKMSVSKAQGIYGVPHSTLEYKVKERSGT) is the HTH psq-type domain. Residues 544-564 (VSKAQGIYGVPHSTLEYKVKE) constitute a DNA-binding region (H-T-H motif). Positions 585–602 (YNMTDSGTGSCKNSSKPV) are enriched in polar residues.

Its subcellular location is the nucleus. May act as transcription activator that binds DNA elements with the sequence 5'-CCCTATCGATCGATCTCTACCT-3'. May play a role in spermatogenesis. This is Ligand-dependent nuclear receptor corepressor-like protein (LCORL) from Homo sapiens (Human).